Here is a 312-residue protein sequence, read N- to C-terminus: MPIKIPDQLPAREVLVREGVSVMDEKTALRQDIRPLQIGLLNLMPNKIRTETQFARLIGASPLQVELTLVRIGNHKAKNTPEDHLITFYETWEEVAPRKFDGFIVTGAPIELLPYEDVTYWNEMTRILDWTTSHVHSSFFICWGAMAAAWHFHGIPKHTLDKKAFGVFRHRNNAPASPYLAGFSDDLALPVSRWTEVRTADIPANSGLEMLMDSDETGPCLLAEAAGNRLYMFNHIEYDSTSLKEEYDRDVAAGVPIEVPHEYYPGNDPTRPPLNRWRSHAHLLFGNWINQVYQTTPYDLDKIGRNLEHALS.

The active-site Acyl-thioester intermediate is the cysteine 142. 2 residues coordinate substrate: lysine 163 and serine 192. The Proton acceptor role is filled by histidine 235. Glutamate 237 is a catalytic residue. Arginine 249 is a substrate binding site.

It belongs to the MetA family.

The protein resides in the cytoplasm. The enzyme catalyses L-homoserine + acetyl-CoA = O-acetyl-L-homoserine + CoA. It participates in amino-acid biosynthesis; L-methionine biosynthesis via de novo pathway; O-acetyl-L-homoserine from L-homoserine: step 1/1. Functionally, transfers an acetyl group from acetyl-CoA to L-homoserine, forming acetyl-L-homoserine. The chain is Homoserine O-acetyltransferase from Chelativorans sp. (strain BNC1).